The primary structure comprises 48 residues: Large ribosomal subunit protein bL33A (48 aa).

This sequence belongs to the bacterial ribosomal protein bL33 family.

In Limosilactobacillus fermentum (strain NBRC 3956 / LMG 18251) (Lactobacillus fermentum), this protein is Large ribosomal subunit protein bL33A.